The primary structure comprises 378 residues: Ecotin-like protein 3 (378 aa).

Disordered stretches follow at residues 191-216 (HRLSSSTPPLIPSAVRGSAHEAHAAP) and 238-378 (PQNN…KADP). Polar residues predominate over residues 274 to 287 (NEPSPSRPRLSSTE). The span at 337 to 348 (RKAEDNVYEKTM) shows a compositional bias: basic and acidic residues. The segment covering 362-378 (KASASSKKSGNGSKADP) has biased composition (low complexity).

This sequence belongs to the protease inhibitor I11 (ecotin) family.

This Leishmania infantum protein is Ecotin-like protein 3.